A 470-amino-acid polypeptide reads, in one-letter code: Proline--tRNA ligase (470 aa).

This sequence belongs to the class-II aminoacyl-tRNA synthetase family. ProS type 3 subfamily. In terms of assembly, homodimer.

The protein resides in the cytoplasm. It carries out the reaction tRNA(Pro) + L-proline + ATP = L-prolyl-tRNA(Pro) + AMP + diphosphate. Functionally, catalyzes the attachment of proline to tRNA(Pro) in a two-step reaction: proline is first activated by ATP to form Pro-AMP and then transferred to the acceptor end of tRNA(Pro). In Malacoplasma penetrans (strain HF-2) (Mycoplasma penetrans), this protein is Proline--tRNA ligase.